Consider the following 520-residue polypeptide: Glucose starvation modulator protein 1 (520 aa).

The segment at residues 20–48 (CVFCHEKHLQCSNERPCKNCVKRGLAHEC) is a DNA-binding region (zn(2)-C6 fungal-type). A PAS domain is found at 376–445 (DYEKLSQLNS…FRLFKTVAVG (70 aa)).

Belongs to the ERT1/acuK family.

The protein localises to the nucleus. Its function is as follows. Transcription factor which regulates nonfermentable carbon utilization. This chain is Glucose starvation modulator protein 1 (GSM1), found in Scheffersomyces stipitis (strain ATCC 58785 / CBS 6054 / NBRC 10063 / NRRL Y-11545) (Yeast).